The chain runs to 279 residues: Mirror-image polydactyly gene 1 protein homolog (279 aa).

The span at 1–11 (MNSEQSIRELG) shows a compositional bias: basic and acidic residues. The segment at 1–21 (MNSEQSIRELGNEVPSEDLEL) is disordered. Coiled-coil stretches lie at residues 65-169 (LNKE…MLEN) and 218-255 (AEEMSAVLEERDAALSQCKQLHQRLLDLKKQNQTSTNN). The disordered stretch occupies residues 247-268 (KQNQTSTNNTKHPTAKNNQEHT). A compositionally biased stretch (polar residues) spans 248–263 (QNQTSTNNTKHPTAKN).

This chain is Mirror-image polydactyly gene 1 protein homolog (Mipol1), found in Mus musculus (Mouse).